A 515-amino-acid polypeptide reads, in one-letter code: 2-isopropylmalate synthase (515 aa).

The region spanning 4 to 266 (IKIFDTTLRD…ETGLILKETK (263 aa)) is the Pyruvate carboxyltransferase domain. Positions 13, 201, 203, and 237 each coordinate Mn(2+). A regulatory domain region spans residues 392–515 (KLIQFGVSYD…ANLTRLVYES (124 aa)).

Belongs to the alpha-IPM synthase/homocitrate synthase family. LeuA type 1 subfamily. In terms of assembly, homodimer. Mn(2+) is required as a cofactor.

It is found in the cytoplasm. It carries out the reaction 3-methyl-2-oxobutanoate + acetyl-CoA + H2O = (2S)-2-isopropylmalate + CoA + H(+). It participates in amino-acid biosynthesis; L-leucine biosynthesis; L-leucine from 3-methyl-2-oxobutanoate: step 1/4. Its function is as follows. Catalyzes the condensation of the acetyl group of acetyl-CoA with 3-methyl-2-oxobutanoate (2-ketoisovalerate) to form 3-carboxy-3-hydroxy-4-methylpentanoate (2-isopropylmalate). This chain is 2-isopropylmalate synthase, found in Oceanobacillus iheyensis (strain DSM 14371 / CIP 107618 / JCM 11309 / KCTC 3954 / HTE831).